The chain runs to 21 residues: Snake venom serine protease jerdonase (21 aa).

Positions 1 to 21 constitute a Peptidase S1 domain; sequence IIGGDECNINEHPFLVALYDA.

This sequence belongs to the peptidase S1 family. Snake venom subfamily. In terms of assembly, monomer. Post-translationally, glycosylated; contains 35.8% neutral carbohydrate. As to expression, expressed by the venom gland.

It localises to the secreted. Its activity is regulated as follows. Inhibited by PMSF and soybean trypsin inhibitor. Partially inhibited by L-cysteine and DTT. Not affected by EDTA. In terms of biological role, multifunctional venom serine protease that has fibrino(geno)lytic activity towards the A alpha-chain of human fibrinogen (FGA) and a slow activity towards the B beta-chain (FGB). Also hydrolyzes bovine low-molecular-mass kininogen and releases bradykinin. Catalyzes the hydrolysis of BAEE, S-2238 and S-2302. This Protobothrops jerdonii (Jerdon's pitviper) protein is Snake venom serine protease jerdonase.